The chain runs to 718 residues: Mitotic spindle assembly checkpoint protein MAD1 (718 aa).

Met-1 bears the N-acetylmethionine mark. Ser-16 carries the post-translational modification Phosphoserine. A coiled-coil region spans residues 46 to 632 (QQSMQLEERA…QTKIQEFRKA (587 aa)). Residue Lys-61 is modified to N6-acetyllysine; alternate. Residue Lys-61 forms a Glycyl lysine isopeptide (Lys-Gly) (interchain with G-Cter in SUMO2); alternate linkage. Residues 79 to 82 (KRAR) carry the Nuclear localization signal motif. The residue at position 214 (Ser-214) is a Phosphoserine. The important for interaction with IK stretch occupies residues 301–340 (VGLELENERLLAKLQSWERLDQTMGLSIRTPEDLSRFVVE). Residues 380–532 (LLEERKKRET…EAQLERRALQ (153 aa)) form a necessary for interaction with NEK2 region. The residue at position 428 (Ser-428) is a Phosphoserine. The interval 439–480 (EDMVQKVHSHSAEMEAQLSQALEELGGQKQRADMLEMELKML) is important for interaction with IK. The segment at 540–551 (TKVLHMSLNPTS) is necessary for interaction with MAD2L1. Ser-598 and Ser-610 each carry phosphoserine. A Phosphotyrosine modification is found at Tyr-634. The residue at position 716 (Thr-716) is a Phosphothreonine.

Belongs to the MAD1 family. As to quaternary structure, homodimer. Dimerizes via its N- and C- terminal regions. Heterodimerizes with MAD2L1 in order to form a tetrameric MAD1L1-MAD2L1 core complex. Interacts with the closed conformation form of MAD2L1 (C-MAD2) and open conformation form of MAD2L1 (O-MAD2). It is unclear whether MAD1L1 dimerization promotes the conversion of closed to open conformation of MAD2L1. Formation of a heterotetrameric core complex containing two molecules each of MAD1L1 and of MAD2L1 promotes binding of another molecule of MAD2L1 to each MAD2L1, resulting in a heterohexamer. Perturbation of the original MAD1L1-MAD2L1 structure by the spindle checkpoint may decrease MAD2L1 affinity for MAD1L1. CDC20 can compete with MAD1L1 for MAD2L1 binding, until the attachment and/or tension dampen the checkpoint signal, preventing further release of MAD2L1 on to CDC20. Also able to interact with the BUB1/BUB3 complex. Interacts with NEK2. Interacts with TTK. Interacts with TPR; the interactions occurs in a microtubule-independent manner. Interacts with IK. Interacts with the viral Tax protein. Interacts with PRAP1. Interacts with MAD2L1; this interaction leads to the cytoplasmic sequestration of MAD2L1. Interacts with PRAP1. Phosphorylated; by BUB1. Become hyperphosphorylated in late S through M phases or after mitotic spindle damage. Phosphorylated; by TTK. Expressed in hepatocellular carcinomas and hepatoma cell lines (at protein level).

It is found in the nucleus. Its subcellular location is the chromosome. The protein localises to the centromere. The protein resides in the kinetochore. It localises to the nucleus envelope. It is found in the cytoplasm. Its subcellular location is the cytoskeleton. The protein localises to the microtubule organizing center. The protein resides in the centrosome. It localises to the spindle. It is found in the spindle pole. Its function is as follows. Component of the spindle-assembly checkpoint that prevents the onset of anaphase until all chromosomes are properly aligned at the metaphase plate. Forms a heterotetrameric complex with the closed conformation form of MAD2L1 (C-MAD2) at unattached kinetochores during prometaphase, recruits an open conformation of MAD2L1 (O-MAD2) and promotes the conversion of O-MAD2 to C-MAD2, which ensures mitotic checkpoint signaling. In terms of biological role, sequesters MAD2L1 in the cytoplasm preventing its function as an activator of the mitotic spindle assembly checkpoint (SAC) resulting in SAC impairment and chromosomal instability in hepatocellular carcinomas. The polypeptide is Mitotic spindle assembly checkpoint protein MAD1 (MAD1L1) (Homo sapiens (Human)).